The following is a 463-amino-acid chain: Nuclear hormone receptor family member nhr-3 (463 aa).

The nuclear receptor DNA-binding region spans 50 to 125 (STICSVCCDE…VGMEPDAIRP (76 aa)). 2 consecutive NR C4-type zinc fingers follow at residues 53-73 (CSVC…CFGC) and 89-113 (CRYS…FQKC). Over residues 121-131 (DAIRPDRDKTG) the composition is skewed to basic and acidic residues. Positions 121-143 (DAIRPDRDKTGRQKNPRRNTEGS) are disordered. The NR LBD domain occupies 199–462 (EIENIVIQLQ…VLEELLFLDR (264 aa)).

This sequence belongs to the nuclear hormone receptor family.

The protein resides in the nucleus. Orphan nuclear receptor. The polypeptide is Nuclear hormone receptor family member nhr-3 (nhr-3) (Caenorhabditis elegans).